The chain runs to 29 residues: Phospholemman-like protein (29 aa).

This sequence belongs to the FXYD family. Phosphorylated by protein kinase C.

It localises to the membrane. Its function is as follows. Induces a hyperpolarization-activated chloride current when expressed in Xenopus oocytes. This is Phospholemman-like protein from Scyliorhinus canicula (Small-spotted catshark).